Here is a 590-residue protein sequence, read N- to C-terminus: DEAD-box ATP-dependent RNA helicase 27 (590 aa).

Positions methionine 1–isoleucine 92 are disordered. A compositionally biased stretch (acidic residues) spans serine 27–glutamate 62. The stretch at alanine 40–glutamate 87 forms a coiled coil. The segment covering glutamate 63 to lysine 76 has biased composition (basic and acidic residues). Residues methionine 96 to alanine 124 carry the Q motif motif. A Helicase ATP-binding domain is found at isoleucine 127–serine 302. An ATP-binding site is contributed by alanine 140–threonine 147. The DEAD box motif lies at aspartate 250–aspartate 253. In terms of domain architecture, Helicase C-terminal spans arginine 335–leucine 488. The interval serine 551–phenylalanine 590 is disordered. Residues lysine 579–phenylalanine 590 show a composition bias toward basic and acidic residues.

It belongs to the DEAD box helicase family. DDX18/HAS1 subfamily.

The enzyme catalyses ATP + H2O = ADP + phosphate + H(+). This is DEAD-box ATP-dependent RNA helicase 27 from Oryza sativa subsp. japonica (Rice).